Here is a 224-residue protein sequence, read N- to C-terminus: Phosphoribosylformylglycinamidine synthase subunit PurQ (224 aa).

The 223-residue stretch at 2-224 (TVAVVRFGGS…DGQGILGAFA (223 aa)) folds into the Glutamine amidotransferase type-1 domain. The active-site Nucleophile is cysteine 85. Active-site residues include histidine 202 and glutamate 204.

As to quaternary structure, part of the FGAM synthase complex composed of 1 PurL, 1 PurQ and 2 PurS subunits.

Its subcellular location is the cytoplasm. The catalysed reaction is N(2)-formyl-N(1)-(5-phospho-beta-D-ribosyl)glycinamide + L-glutamine + ATP + H2O = 2-formamido-N(1)-(5-O-phospho-beta-D-ribosyl)acetamidine + L-glutamate + ADP + phosphate + H(+). It catalyses the reaction L-glutamine + H2O = L-glutamate + NH4(+). It functions in the pathway purine metabolism; IMP biosynthesis via de novo pathway; 5-amino-1-(5-phospho-D-ribosyl)imidazole from N(2)-formyl-N(1)-(5-phospho-D-ribosyl)glycinamide: step 1/2. Functionally, part of the phosphoribosylformylglycinamidine synthase complex involved in the purines biosynthetic pathway. Catalyzes the ATP-dependent conversion of formylglycinamide ribonucleotide (FGAR) and glutamine to yield formylglycinamidine ribonucleotide (FGAM) and glutamate. The FGAM synthase complex is composed of three subunits. PurQ produces an ammonia molecule by converting glutamine to glutamate. PurL transfers the ammonia molecule to FGAR to form FGAM in an ATP-dependent manner. PurS interacts with PurQ and PurL and is thought to assist in the transfer of the ammonia molecule from PurQ to PurL. This is Phosphoribosylformylglycinamidine synthase subunit PurQ from Halobacterium salinarum (strain ATCC 700922 / JCM 11081 / NRC-1) (Halobacterium halobium).